Consider the following 409-residue polypeptide: DNA primase small subunit (409 aa).

Active-site residues include glutamate 46, aspartate 111, and aspartate 113. The Zinc knuckle motif signature appears at 123–133 (CCSGAQVCSKC).

Belongs to the eukaryotic-type primase small subunit family. DNA polymerase alpha:primase is a four subunit enzyme complex, which is assembled throughout the cell cycle, and consists of the two DNA polymerase subunits A POL1 and B POL12, and the DNA primase large PRI2 and small PRI1 subunits.

Functionally, DNA primase is the polymerase that synthesizes small RNA primers for the Okazaki fragments made during discontinuous DNA replication. In a complex with DNA polymerase alpha (DNA polymerase alpha:primase) constitutes a replicative polymerase. Both primase components participate in formation of the active center, but the ATP-binding site is exclusively located on p48. The chain is DNA primase small subunit (PRI1) from Saccharomyces cerevisiae (strain ATCC 204508 / S288c) (Baker's yeast).